Consider the following 319-residue polypeptide: Putative peptide biosynthesis protein YydG (319 aa).

Residues 1-214 (MYNKTVSINL…HCPGYDIVYH (214 aa)) form the Radical SAM core domain. 3 residues coordinate [4Fe-4S] cluster: Cys14, Cys18, and Cys21.

It depends on [4Fe-4S] cluster as a cofactor.

Its function is as follows. Required for production of the modified peptide YydF. May activate a metalloenzyme (Potential). The chain is Putative peptide biosynthesis protein YydG (yydG) from Bacillus subtilis (strain 168).